A 189-amino-acid chain; its full sequence is Der GTPase-activating protein YihI (189 aa).

Residues 1-81 are disordered; the sequence is MARKKKTRRV…ALAKKDPRLG (81 aa). Basic and acidic residues-rich tracts occupy residues 9–27 and 35–46; these read RVSD…ELPK and TRYELDAKARED. Positions 60-71 are enriched in polar residues; the sequence is RHSATENNNNHQ.

The protein belongs to the YihI family. As to quaternary structure, interacts with Der.

In terms of biological role, a GTPase-activating protein (GAP) that modifies Der/EngA GTPase function. May play a role in ribosome biogenesis. This is Der GTPase-activating protein YihI from Pasteurella multocida (strain Pm70).